A 99-amino-acid chain; its full sequence is uncharacterized protein (99 aa).

Residues 1–17 (MMMNAFFPAMALMVLVG) form the signal peptide. Cysteine 18 is lipidated: N-palmitoyl cysteine. The S-diacylglycerol cysteine moiety is linked to residue cysteine 18.

It is found in the cell membrane. This is an uncharacterized protein from Shigella flexneri.